Reading from the N-terminus, the 345-residue chain is Prenyltransferase ltmC (345 aa).

Substrate is bound at residue H112. D119 and D123 together coordinate Mg(2+). R128 is a binding site for substrate. N-linked (GlcNAc...) asparagine glycosylation occurs at N130. Residues K212, T213, Q243, N250, and K260 each contribute to the substrate site.

It belongs to the FPP/GGPP synthase family. Mg(2+) is required as a cofactor.

The protein operates within secondary metabolite biosynthesis. Prenyltransferase; part of the gene cluster that mediates the biosynthesis of lolitrems, indole-diterpene mycotoxins that are potent tremorgens in mammals, and are synthesized by clavicipitaceous fungal endophytes in association with their grass hosts. The geranylgeranyl diphosphate (GGPP) synthase ltmG is proposed to catalyze the first step in lolitrem biosynthesis. LtmG catalyzes a series of iterative condensations of isopentenyl diphosphate (IPP) with dimethylallyl diphosphate (DMAPP), geranyl diphosphate (GPP), and farnesyl diphosphate (FPP), to form GGPP. GGPP then condenses with indole-3-glycerol phosphate to form 3-geranylgeranylindole, an acyclic intermediate, to be incorporated into paxilline. Either ltmG or ltmC could be responsible for this step, as both are putative prenyl transferases. The FAD-dependent monooxygenase ltmM then catalyzes the epoxidation of the two terminal alkenes of the geranylgeranyl moiety, which is subsequently cyclized by ltmB, to paspaline. The cytochrome P450 monooxygenases ltmQ and ltmP can sequentially oxidize paspaline to terpendole E and terpendole F. Alternatively, ltmP converts paspaline to an intermediate which is oxidized by ltmQ to terpendole F. LtmF, ltmK, ltmE and ltmJ appear to be unique to the epichloe endophytes. The prenyltransferase ltmF is involved in the 27-hydroxyl-O-prenylation. The cytochrome P450 monooxygenase ltmK is required for the oxidative acetal ring formation. The multi-functional prenyltransferase ltmE is required for C20- and C21-prenylations of the indole ring of paspalanes and acts together with the cytochrome P450 monooxygenase ltmJ to yield lolitremanes by multiple oxidations and ring closures. The stereoisomer pairs of lolitriol and lolitrem N or lolitrem B and lolitrem F may be attributed to variations in the way in which ring closure can occur under the action of ltmJ. While the major product of this pathway is lolitrem B, the prenyl transferases and cytochrome P450 monooxygenases identified in this pathway have a remarkable versatility in their regio- and stereo-specificities to generate a diverse range of metabolites that are products of a metabolic grid rather than a linear pathway. The chain is Prenyltransferase ltmC from Epichloe festucae var. lolii (Neotyphodium lolii).